The following is a 388-amino-acid chain: MAVHNLKDLLAEGVSGRGVLVRSDLNVPLDSDGEQGRITDPGPDHRVGADVERTGRGGRQGGGRRAPRASQEWAGPGVVAGPGGRRARRAAGPARAAGLGRGGHRRPGPRRGVDRRRRPAAGKHPVRRPRNVQGRRRAARAGRQMAELVGPTGAFVSDGFGVVHRKQASVYDVATLLPHYAGTLVAEEIAVLEQLTGSTKRPYAVVLGGSKVSDKLGVIESLATKADSIVIGGGMCFTFLAAQGFSVGKSLVETEMVDTCRRLLDTYVDVLRLPVDMVAADRLAADAAPQTVPADAIPDDLMGVDIGPGSVKRFTALLSNAETMFWNGPMGVFEFPAFAAGTKGLAEAIAAATGKGAFSVVGGGDSAAATAVELQLLFPLVRLIARLA.

Substrate-binding positions include 24 to 26 (DLN), R37, 56 to 59 (RGGR), R117, and R165. The tract at residues 26–136 (NVPLDSDGEQ…RRPRNVQGRR (111 aa)) is disordered. Residues 34-55 (EQGRITDPGPDHRVGADVERTG) show a composition bias toward basic and acidic residues. The segment covering 102 to 136 (GGHRRPGPRRGVDRRRRPAAGKHPVRRPRNVQGRR) has biased composition (basic residues). Residues K215, G303, E334, and 363-366 (GGDS) each bind ATP.

The protein belongs to the phosphoglycerate kinase family. Monomer.

It is found in the cytoplasm. It catalyses the reaction (2R)-3-phosphoglycerate + ATP = (2R)-3-phospho-glyceroyl phosphate + ADP. It participates in carbohydrate degradation; glycolysis; pyruvate from D-glyceraldehyde 3-phosphate: step 2/5. This is Phosphoglycerate kinase (pgk) from Mycobacterium avium.